Here is a 961-residue protein sequence, read N- to C-terminus: MHLNDIMASPHEPLNWSSSPNLIVDTIQEDKDYRVDYGDCTTIGHHEIKETPDKCDFLDNTNSPVNATVLNSISEDSRDQFENSVLQLRDQDEPENTAPQGSSHSGDGGNNSANEDIRIHFSRSRSGSGNGGFLEGLFGCLRPVWNIIGKAYSTDYKLQQQDTWEVPFEEISELQWLGSGAQGAVFLGKFRGEEVAIKKVREQKETDIKHLRKLKHPNIIAFKGVCTQAPCYCILMEYCAQGQLYEVLRAGRKVTPKLLVEWSTGIASGMNYLHLHKIIHRDLKSPNVLVTHADTVKISDFGTSKELSDKSTKMSFAGTVAWMAPEVIRNEPVSEKVDIWSFGVLLWELLTGEIPYKDVDSSAIIWGVGSNSLHLPVPSTCPDGFKILMKQTWQSKPRNRPSFRQILMHLDIAAADVLGTPQETYFKSQAEWREEVKKHFEKIKSEGTCIHRLDEELIRRRREELRHALDIREHYERKLERANNLYMELSSIMLQLEVREKELTRREQTVEKKYPGTYKRHPVRPIVHPNSFEKLIKKKGPPSRVPSQSKRPDLLKSDGIVNAEGSAASASPISGSPKTSSGGGKGRYRSKPRHRRGNSKGSHADFVGVLKYQESPAPSQQSSQHQTPASPPVTPCSPYHETSQVMPTRHQTLNVHGQNIANCANNLRYFGPAAALRSPLSSHAHRRMSGFSPDLLSSTLEADSRIQPEREYEYCEQHPYNPSQGCTETSVQHDIDTENLNNTNVVTAEYRTSDGDLPDSPRHNLVQEDYEKLETGGEQFSSLKAAVGVSALTVPTPPALPRRIHTLRKNGDDSSEGEEGEVDSEVEFPRRHRPPRGMSTCQSYSTFSSENFSVSDGEEGNTSDHSNSPDDVACGNKVWQVDKLDDLLSQTPEIPIEISMQSDGLSDKECAVRRVKTQMSLGKLCPEEHNYENAESDCDSSEGECSDATVRTNNPVNSSTW.

The segment at 89–115 (RDQDEPENTAPQGSSHSGDGGNNSANE) is disordered. Residues 101–114 (GSSHSGDGGNNSAN) show a composition bias toward low complexity. The Protein kinase domain maps to 171 to 412 (ISELQWLGSG…FRQILMHLDI (242 aa)). ATP is bound by residues 177-185 (LGSGAQGAV) and Lys-198. Asp-282 serves as the catalytic Proton acceptor. 2 leucine-zipper regions span residues 436–457 (VKKHFEKIKSEGTCIHRLDEEL) and 489–510 (LSSIMLQLEVREKELTRREQTV). A coiled-coil region spans residues 460–497 (RRREELRHALDIREHYERKLERANNLYMELSSIMLQLE). 3 disordered regions span residues 507-644 (EQTV…ETSQ), 796-874 (TPPA…DVAC), and 933-961 (NAESDCDSSEGECSDATVRTNNPVNSSTW). Low complexity predominate over residues 563–580 (AEGSAASASPISGSPKTS). Residues 586-598 (GRYRSKPRHRRGN) show a composition bias toward basic residues. The span at 613 to 628 (QESPAPSQQSSQHQTP) shows a compositional bias: low complexity. The span at 813 to 826 (DSSEGEEGEVDSEV) shows a compositional bias: acidic residues. An acidic region spans residues 814 to 827 (SSEGEEGEVDSEVE). Polar residues predominate over residues 839–854 (STCQSYSTFSSENFSV). Over residues 934–945 (AESDCDSSEGEC) the composition is skewed to acidic residues. Positions 949–961 (TVRTNNPVNSSTW) are enriched in polar residues.

Belongs to the protein kinase superfamily. Ser/Thr protein kinase family.

The protein resides in the cytoplasm. The protein localises to the membrane. It carries out the reaction L-seryl-[protein] + ATP = O-phospho-L-seryl-[protein] + ADP + H(+). It catalyses the reaction L-threonyl-[protein] + ATP = O-phospho-L-threonyl-[protein] + ADP + H(+). May have a role in the JNK signaling pathway. This is Mitogen-activated protein kinase kinase kinase 13-B (map3k13-b) from Xenopus laevis (African clawed frog).